The following is a 1084-amino-acid chain: TNF receptor-associated factor family protein DDB_G0272098 (1084 aa).

The region spanning 19–103 is the LIM zinc-binding domain; that stretch reads YYCPDCGELL…KNRYYETKNF (85 aa). 2 TRAF-type zinc fingers span residues 122-190 and 191-248; these read KHIK…IDHE and IHLS…YNMS. Positions 265 to 321 form a coiled coil; the sequence is IEEQNQDIKELHNFIENHLSKKFIDLDTIVNIQKYLIKNKNQKISQLTEIIKRVDNS. 4 disordered regions span residues 348-392, 490-523, 537-656, and 709-897; these read YKNS…NINE, IRQQ…NTTI, NNNI…KDGL, and SIVE…NDDD. Composition is skewed to low complexity over residues 349 to 375, 492 to 509, 537 to 549, and 556 to 570; these read KNSN…TNEN, QQQQ…QQQQ, NNNI…NNNK, and ITAA…TTST. The stretch at 489–553 forms a coiled coil; the sequence is LIRQQQQQQQ…NNNNNKNNDD (65 aa). The span at 571-586 shows a compositional bias: polar residues; sequence HTILNGTNNEASMTDI. The span at 587–637 shows a compositional bias: low complexity; that stretch reads NETTSTTTTAETTEATASESTEESNNTAETTTTTTTTTTTITTAAETVNST. Residues 644–656 are compositionally biased toward basic and acidic residues; it reads TSEKVEEKGKDGL. The stretch at 735–852 forms a coiled coil; it reads NGNENENENE…NNNNNNNENV (118 aa). The segment covering 739–757 has biased composition (acidic residues); that stretch reads NENENENENENENENENEN. The span at 774 to 785 shows a compositional bias: polar residues; sequence SNINTSNDTEPT. The span at 790 to 799 shows a compositional bias: basic and acidic residues; that stretch reads EDIKKNKENE. The span at 809-849 shows a compositional bias: low complexity; that stretch reads NNNIKSVEDTNNNNNNNNNNNNNNNNNNNNNNNNNNNNNNN. Basic and acidic residues-rich tracts occupy residues 853 to 864 and 875 to 892; these read YDIKKDRNRENV and ENGK…SEDK. The region spanning 909-1042 is the MATH domain; that stretch reads IFRNQILFKD…DNCFIVNLEV (134 aa). Positions 1056 to 1084 are disordered; sequence LLQKSSPPAATTTTTTSSSSSKTTPKTKR. The segment covering 1059–1084 has biased composition (low complexity); sequence KSSPPAATTTTTTSSSSSKTTPKTKR.

It belongs to the TNF receptor-associated factor family.

Its subcellular location is the cytoplasm. In terms of biological role, probable adapter protein and signal transducer that links members of the tumor necrosis factor receptor family to different signaling pathways by association with the receptor cytoplasmic domain and kinases. The polypeptide is TNF receptor-associated factor family protein DDB_G0272098 (Dictyostelium discoideum (Social amoeba)).